Consider the following 397-residue polypeptide: MVADLTSDISESQEQETETNSANNNGAVFRPENCPRLVIKIGSSLLVDQRGQVRRDWLQTVAYDIAKLHQAGQQIIVVSSGAIALGARRLNLPRGGRASLEDAQASASVGQILLSQCWAELLGACSLDSSQILLTLDDLEDRRRYLNVSATLDRLLSLGVVPVINENDSIATAEIRFGDNDRLAARIGQASHASGVILFSDVDGLYTANPMKDPNAKRIDRVEHIDNSTEAMASSDSASGMGSGGMASKVEAARIATYSGVNLAITTGKRPSPLTMFLDDGAGTLFTADESASAHKTWLAGRLTAHGQVYIDQGAVEALHDGNSLLPAGVCSIEGKFNRGDVVDILDQEHNLIARGLIEYDSEDSAQITGKRSQEIADILGYEARTALIHRNHMVML.

The interval 1–28 (MVADLTSDISESQEQETETNSANNNGAV) is disordered. Lys40 is a binding site for ATP. 3 residues coordinate substrate: Ser80, Asp168, and Asn180. ATP is bound by residues 200 to 201 (SD) and 243 to 249 (SGGMASK). Residues 306–383 (HGQVYIDQGA…QEIADILGYE (78 aa)) form the PUA domain.

Belongs to the glutamate 5-kinase family.

The protein localises to the cytoplasm. It catalyses the reaction L-glutamate + ATP = L-glutamyl 5-phosphate + ADP. It participates in amino-acid biosynthesis; L-proline biosynthesis; L-glutamate 5-semialdehyde from L-glutamate: step 1/2. Functionally, catalyzes the transfer of a phosphate group to glutamate to form L-glutamate 5-phosphate. The protein is Glutamate 5-kinase of Zymomonas mobilis subsp. mobilis (strain ATCC 31821 / ZM4 / CP4).